Here is a 382-residue protein sequence, read N- to C-terminus: Lipid-A-disaccharide synthase (382 aa).

It belongs to the LpxB family.

It carries out the reaction 2-N,3-O-bis[(3R)-3-hydroxytetradecanoyl]-alpha-D-glucosaminyl 1-phosphate + UDP-2-N,3-O-bis[(3R)-3-hydroxytetradecanoyl]-alpha-D-glucosamine = lipid A disaccharide (E. coli) + UDP + H(+). It catalyses the reaction a lipid X + a UDP-2-N,3-O-bis[(3R)-3-hydroxyacyl]-alpha-D-glucosamine = a lipid A disaccharide + UDP + H(+). Its pathway is glycolipid biosynthesis; lipid IV(A) biosynthesis; lipid IV(A) from (3R)-3-hydroxytetradecanoyl-[acyl-carrier-protein] and UDP-N-acetyl-alpha-D-glucosamine: step 5/6. Its function is as follows. Condensation of UDP-2,3-diacylglucosamine and 2,3-diacylglucosamine-1-phosphate to form lipid A disaccharide, a precursor of lipid A, a phosphorylated glycolipid that anchors the lipopolysaccharide to the outer membrane of the cell. This is Lipid-A-disaccharide synthase from Escherichia coli O8 (strain IAI1).